The following is a 319-amino-acid chain: MLSLQTLAKKAVAKQSVPEEYHYILKYCGLWWQNKPISLCHYCNYVILSSTPFKGELLHLDVALIMAIKENNYDVIRLFTEWGANIYYGLTCARTEQTQELCRQLGAKDSLNNKEIFTGLMRHKTSNNIILCHEIFDKNPMLETLNVQEMGEEIHRELKLFIFYILDNVPMNVLIKYWYAIAVKYKLKRAISFFYQTYGHLSMWRLMCAIYFNNVFDLHEIYEQKIVHMDIDKMMKLACMQDYNFLTIYYCFVLGGDIDKAITVTQWHHQTNNLYFCKDLKDLKQNILTARPLLLPNITDPKKIYTMLKNYLPTSSNSL.

The protein belongs to the asfivirus MGF 360 family.

Plays a role in virus cell tropism, and may be required for efficient virus replication in macrophages. This chain is Protein MGF 360-8L, found in African swine fever virus (isolate Warthog/Namibia/Wart80/1980) (ASFV).